Consider the following 217-residue polypeptide: UPF0502 protein Smlt0097 (217 aa).

This sequence belongs to the UPF0502 family.

In Stenotrophomonas maltophilia (strain K279a), this protein is UPF0502 protein Smlt0097.